Reading from the N-terminus, the 656-residue chain is tRNA 5-methylaminomethyl-2-thiouridine biosynthesis bifunctional protein MnmC (656 aa).

A tRNA (mnm(5)s(2)U34)-methyltransferase region spans residues 1–236 (MTDPLIPAVL…KRAMLVGHFA (236 aa)). Residues 260–656 (IGAGLAGCAV…LRALRQGAVS (397 aa)) form an FAD-dependent cmnm(5)s(2)U34 oxidoreductase region.

The protein in the N-terminal section; belongs to the methyltransferase superfamily. tRNA (mnm(5)s(2)U34)-methyltransferase family. This sequence in the C-terminal section; belongs to the DAO family. Requires FAD as cofactor.

It localises to the cytoplasm. It carries out the reaction 5-aminomethyl-2-thiouridine(34) in tRNA + S-adenosyl-L-methionine = 5-methylaminomethyl-2-thiouridine(34) in tRNA + S-adenosyl-L-homocysteine + H(+). Functionally, catalyzes the last two steps in the biosynthesis of 5-methylaminomethyl-2-thiouridine (mnm(5)s(2)U) at the wobble position (U34) in tRNA. Catalyzes the FAD-dependent demodification of cmnm(5)s(2)U34 to nm(5)s(2)U34, followed by the transfer of a methyl group from S-adenosyl-L-methionine to nm(5)s(2)U34, to form mnm(5)s(2)U34. In Paraburkholderia phytofirmans (strain DSM 17436 / LMG 22146 / PsJN) (Burkholderia phytofirmans), this protein is tRNA 5-methylaminomethyl-2-thiouridine biosynthesis bifunctional protein MnmC.